A 265-amino-acid chain; its full sequence is Probable autolysin SsaALP (265 aa).

Positions 1-25 (MKKLAFAITATSGAAAFLTHHDAQA) are cleaved as a signal peptide. LysM domains follow at residues 27 to 70 (TQHT…VISV) and 89 to 132 (SSHT…TLQI). The disordered stretch occupies residues 72–92 (GSDAQNTSNTSPQAGSASSHT). Positions 74-92 (DAQNTSNTSPQAGSASSHT) are enriched in polar residues. Positions 141-265 (TPTATTGSNG…SEVSSYAFIH (125 aa)) constitute a Peptidase C51 domain.

It catalyses the reaction Hydrolyzes the link between N-acetylmuramoyl residues and L-amino acid residues in certain cell-wall glycopeptides.. Functionally, has weak lytic activity toward S.aureus cells. The polypeptide is Probable autolysin SsaALP (Staphylococcus aureus (strain NCTC 8325 / PS 47)).